The following is a 952-amino-acid chain: Isoleucine--tRNA ligase (952 aa).

Positions 58–68 match the 'HIGH' region motif; it reads PYANGDIHIGH. Glutamate 576 provides a ligand contact to L-isoleucyl-5'-AMP. A 'KMSKS' region motif is present at residues 617–621; it reads KMSKS. An ATP-binding site is contributed by lysine 620. Cysteine 915, cysteine 918, cysteine 935, and cysteine 938 together coordinate Zn(2+).

Belongs to the class-I aminoacyl-tRNA synthetase family. IleS type 1 subfamily. Monomer. The cofactor is Zn(2+).

The protein resides in the cytoplasm. It catalyses the reaction tRNA(Ile) + L-isoleucine + ATP = L-isoleucyl-tRNA(Ile) + AMP + diphosphate. In terms of biological role, catalyzes the attachment of isoleucine to tRNA(Ile). As IleRS can inadvertently accommodate and process structurally similar amino acids such as valine, to avoid such errors it has two additional distinct tRNA(Ile)-dependent editing activities. One activity is designated as 'pretransfer' editing and involves the hydrolysis of activated Val-AMP. The other activity is designated 'posttransfer' editing and involves deacylation of mischarged Val-tRNA(Ile). This is Isoleucine--tRNA ligase from Aliivibrio fischeri (strain ATCC 700601 / ES114) (Vibrio fischeri).